Reading from the N-terminus, the 409-residue chain is Arginine deiminase (409 aa).

Residue Cys397 is the Amidino-cysteine intermediate of the active site.

It belongs to the arginine deiminase family.

Its subcellular location is the cytoplasm. It catalyses the reaction L-arginine + H2O = L-citrulline + NH4(+). The protein operates within amino-acid degradation; L-arginine degradation via ADI pathway; carbamoyl phosphate from L-arginine: step 1/2. The polypeptide is Arginine deiminase (arcA) (Metamycoplasma hominis (Mycoplasma hominis)).